Reading from the N-terminus, the 487-residue chain is MKAQPKASHFIDGEYVEDSDGTVIESLYPATGEVIARLHAATPAIVEKAIAAAKSAQPEWAAMSPMARGRILKRAADIMRERNRELSELETLDTGKPIQETIVADPTSGADAFEFFGGVAPAGLNGSHIPLGQDFAYTKRVPLGVCVGIGAWNYPQQIACWKGAPALIAGNAMVFKPSENTPLGALKIAEILHEAGLPKGLFNVIQGDRDTGPLLVNHPDVAKVSLTGSVPTGRRVAAAAAGSLKHVTMELGGKSPLIVFDDADLDSAVGGAMLGNFYSTGQVCSNGTRVFVQKGIKTEFLKRLKARTEAMLIGDPMDEATQIGPMVSWAQREKVVAYIEKGKAEGATLVAGGGIPNNVSGEGYYVQPTVFADVTDEMTIAREEIFGPVMSVLDFDDEDEVITRANASEFGLSGGVFTADLTRAHRVVDRLEAGTLWINAYNLAPVEIPFGGSKQSGFGRENSLAALEHYSELKTVYVGMGPVQAPY.

The K(+) site is built by Ser-26 and Asp-93. 150-152 (GAW) is a binding site for NAD(+). The Charge relay system role is filled by Lys-162. NAD(+) contacts are provided by residues 176–179 (KPSE) and 229–232 (SVPT). Leu-244 lines the K(+) pocket. Glu-250 functions as the Proton acceptor in the catalytic mechanism. NAD(+)-binding residues include Gly-252, Cys-284, and Glu-384. Cys-284 serves as the catalytic Nucleophile. Cys-284 carries the post-translational modification Cysteine sulfenic acid (-SOH). 2 residues coordinate K(+): Lys-454 and Gly-457. Glu-461 acts as the Charge relay system in catalysis.

It belongs to the aldehyde dehydrogenase family. As to quaternary structure, dimer of dimers. The cofactor is K(+).

The enzyme catalyses betaine aldehyde + NAD(+) + H2O = glycine betaine + NADH + 2 H(+). It participates in amine and polyamine biosynthesis; betaine biosynthesis via choline pathway; betaine from betaine aldehyde: step 1/1. In terms of biological role, involved in the biosynthesis of the osmoprotectant glycine betaine. Catalyzes the irreversible oxidation of betaine aldehyde to the corresponding acid. In Rhizobium etli (strain CIAT 652), this protein is Betaine aldehyde dehydrogenase.